Reading from the N-terminus, the 313-residue chain is Glycine--tRNA ligase alpha subunit (313 aa).

It belongs to the class-II aminoacyl-tRNA synthetase family. In terms of assembly, tetramer of two alpha and two beta subunits.

It localises to the cytoplasm. The catalysed reaction is tRNA(Gly) + glycine + ATP = glycyl-tRNA(Gly) + AMP + diphosphate. This is Glycine--tRNA ligase alpha subunit from Leuconostoc mesenteroides subsp. mesenteroides (strain ATCC 8293 / DSM 20343 / BCRC 11652 / CCM 1803 / JCM 6124 / NCDO 523 / NBRC 100496 / NCIMB 8023 / NCTC 12954 / NRRL B-1118 / 37Y).